The sequence spans 310 residues: Acetylglutamate kinase (310 aa).

Residues glycine 76–glycine 77, arginine 98, and asparagine 203 contribute to the substrate site.

It belongs to the acetylglutamate kinase family. ArgB subfamily.

The protein resides in the cytoplasm. It carries out the reaction N-acetyl-L-glutamate + ATP = N-acetyl-L-glutamyl 5-phosphate + ADP. It functions in the pathway amino-acid biosynthesis; L-arginine biosynthesis; N(2)-acetyl-L-ornithine from L-glutamate: step 2/4. Its function is as follows. Catalyzes the ATP-dependent phosphorylation of N-acetyl-L-glutamate. The protein is Acetylglutamate kinase of Cutibacterium acnes (strain DSM 16379 / KPA171202) (Propionibacterium acnes).